A 339-amino-acid chain; its full sequence is Ketol-acid reductoisomerase (NADP(+)) (339 aa).

One can recognise a KARI N-terminal Rossmann domain in the interval 1–182 (MRVYYDRDAD…GGGRSGIIET (182 aa)). Residues 24 to 27 (YGSQ), Lys48, Ser51, Thr53, and 83 to 86 (DELQ) each bind NADP(+). Residue His108 is part of the active site. Gly134 is a binding site for NADP(+). The KARI C-terminal knotted domain maps to 183-328 (TFQEECETDL…AKLRGMMPWI (146 aa)). The Mg(2+) site is built by Asp191, Glu195, Glu227, and Glu231. Position 252 (Ser252) interacts with substrate.

It belongs to the ketol-acid reductoisomerase family. It depends on Mg(2+) as a cofactor.

It catalyses the reaction (2R)-2,3-dihydroxy-3-methylbutanoate + NADP(+) = (2S)-2-acetolactate + NADPH + H(+). It carries out the reaction (2R,3R)-2,3-dihydroxy-3-methylpentanoate + NADP(+) = (S)-2-ethyl-2-hydroxy-3-oxobutanoate + NADPH + H(+). Its pathway is amino-acid biosynthesis; L-isoleucine biosynthesis; L-isoleucine from 2-oxobutanoate: step 2/4. It functions in the pathway amino-acid biosynthesis; L-valine biosynthesis; L-valine from pyruvate: step 2/4. Involved in the biosynthesis of branched-chain amino acids (BCAA). Catalyzes an alkyl-migration followed by a ketol-acid reduction of (S)-2-acetolactate (S2AL) to yield (R)-2,3-dihydroxy-isovalerate. In the isomerase reaction, S2AL is rearranged via a Mg-dependent methyl migration to produce 3-hydroxy-3-methyl-2-ketobutyrate (HMKB). In the reductase reaction, this 2-ketoacid undergoes a metal-dependent reduction by NADPH to yield (R)-2,3-dihydroxy-isovalerate. This Allorhizobium ampelinum (strain ATCC BAA-846 / DSM 112012 / S4) (Agrobacterium vitis (strain S4)) protein is Ketol-acid reductoisomerase (NADP(+)).